A 293-amino-acid polypeptide reads, in one-letter code: uncharacterized protein (293 aa).

One can recognise an HTH lysR-type domain in the interval 1-58; it reads MELKQLITFITAAEHVNFTLTAKMLNYAQSSVTSQIKSLEEEIGTPLFERLGKRLILT. The segment at residues 18 to 37 is a DNA-binding region (H-T-H motif); the sequence is FTLTAKMLNYAQSSVTSQIK.

This sequence belongs to the LysR transcriptional regulatory family.

It is found in the cytoplasm. This is an uncharacterized protein from Bacillus subtilis (strain 168).